Here is a 150-residue protein sequence, read N- to C-terminus: UPF0208 membrane protein VP2081 (150 aa).

2 consecutive transmembrane segments (helical) span residues 42–62 (FGIK…MAFN) and 70–90 (SIVV…WLGA).

It belongs to the UPF0208 family.

The protein resides in the cell inner membrane. In Vibrio parahaemolyticus serotype O3:K6 (strain RIMD 2210633), this protein is UPF0208 membrane protein VP2081.